Consider the following 452-residue polypeptide: Zinc finger protein 672 (452 aa).

C2H2-type zinc fingers lie at residues 14–36 (YSCS…ERAH), 42–64 (FRCL…RRTH), 70–92 (YICS…LGAH), and 99–122 (CPCR…RRQH). The segment at 128 to 150 (RRCPLCARTFRQSALLFHQARAH) adopts a C2H2-type 5; degenerate zinc-finger fold. 9 C2H2-type zinc fingers span residues 163-185 (HRCA…ARIH), 199-221 (HQCG…LQTH), 227-249 (FKCP…QRTH), 255-277 (YACG…RRSH), 283-305 (HACA…QRIH), 311-333 (FACP…RRTH), 339-361 (YRCE…RRNH), 367-389 (HKCP…RKTH), and 395-417 (AECA…QRAH).

This sequence belongs to the krueppel C2H2-type zinc-finger protein family.

The protein localises to the nucleus. May be involved in transcriptional regulation. The chain is Zinc finger protein 672 from Homo sapiens (Human).